Reading from the N-terminus, the 292-residue chain is MKYIGAHVSAAGGVENAPKNAVAIGANAFALFTKNQRQWKAKPLTEESIAAFKENLTEAGIEARHVLPHDSYLINLGHPEAEALEKSRGAFMDELGRCAQLGLPLLNFHPGSHLKKIDPEACLDRIAESINLAHGSVADVITVIENTAGQGTNLGYRFEHLARIIAAVEDKSRVGVCIDTCHAFAAGYDLRTVEACEKSWAEFDRIVGFKYLRGMHLNDAKSEFFSRVDRHQSLGAGNIGWEAFRYIMKDDRFDDIPLILETVDTSLWQEEIKKLQQWSVVEWRELEKTKTS.

Zn(2+) contacts are provided by histidine 69, histidine 109, glutamate 145, aspartate 179, histidine 182, histidine 216, aspartate 229, histidine 231, and glutamate 261.

This sequence belongs to the AP endonuclease 2 family. Zn(2+) serves as cofactor.

It carries out the reaction Endonucleolytic cleavage to 5'-phosphooligonucleotide end-products.. Endonuclease IV plays a role in DNA repair. It cleaves phosphodiester bonds at apurinic or apyrimidinic (AP) sites, generating a 3'-hydroxyl group and a 5'-terminal sugar phosphate. In Desulfotalea psychrophila (strain LSv54 / DSM 12343), this protein is Probable endonuclease 4.